The chain runs to 200 residues: Superoxide dismutase [Mn] 1 (200 aa).

Mn(2+) contacts are provided by H29, H76, D158, and H162.

It belongs to the iron/manganese superoxide dismutase family. It depends on Mn(2+) as a cofactor.

It carries out the reaction 2 superoxide + 2 H(+) = H2O2 + O2. In terms of biological role, destroys superoxide anion radicals which are normally produced within the cells and which are toxic to biological systems. This is Superoxide dismutase [Mn] 1 (sod1) from Haloferax volcanii (strain ATCC 29605 / DSM 3757 / JCM 8879 / NBRC 14742 / NCIMB 2012 / VKM B-1768 / DS2) (Halobacterium volcanii).